Reading from the N-terminus, the 212-residue chain is Fucoxanthin-chlorophyll a-c binding protein E, chloroplastic (212 aa).

The transit peptide at 1-34 (MAIACAAAPGLRGAEPFNGAALATSAKSSSAMKM) directs the protein to the chloroplast. The next 3 helical transmembrane spans lie at 76 to 96 (IAML…PGML), 117 to 137 (IPPL…LFVV), and 178 to 198 (GRAA…SNQP).

This sequence belongs to the fucoxanthin chlorophyll protein family. The LHC complex of chromophytic algae is composed of fucoxanthin, chlorophyll A and C bound non-covalently by fucoxanthin chlorophyll proteins (FCPs). The ratio of pigments in this LHC is; fucoxanthin: chlorophyll C: chlorophyll A; (0.6-1): (0.1-0.3): (1).

It is found in the plastid. The protein localises to the chloroplast thylakoid membrane. The light-harvesting complex (LHC) functions as a light receptor, it captures and delivers excitation energy to photosystems with which it is closely associated. Energy is transferred from the carotenoid and chlorophyll C (or B) to chlorophyll A and the photosynthetic reaction centers where it is used to synthesize ATP and reducing power. In Macrocystis pyrifera (Giant kelp), this protein is Fucoxanthin-chlorophyll a-c binding protein E, chloroplastic (FCPE).